Here is an 84-residue protein sequence, read N- to C-terminus: Protein myomixer (84 aa).

The Cytoplasmic portion of the chain corresponds to 1–4 (MPTP). The helical transmembrane segment at 5–25 (LLPLLLRLLLSCLLLPAARLA) threads the bilayer. Residues 26–84 (RQYLLPLLRRLARRLGSQDMREALLGCLLFILSQRHSPDAGEASRVDRLERRERLGPQK) lie on the Extracellular side of the membrane. The AxLyCxL signature appears at 48 to 57 (ALLGCLLFIL). Residues 62–84 (SPDAGEASRVDRLERRERLGPQK) are disordered.

The protein belongs to the MYMX family. Interacts with MYMK.

The protein resides in the cell membrane. In terms of biological role, myoblast-specific protein that mediates myoblast fusion, an essential step for the formation of multi-nucleated muscle fibers. Involved in membrane fusion downstream of the lipid mixing step mediated by MYMK. Acts by generating membrane stresses via its extracellular C-terminus, leading to drive fusion pore formation. Acts independently of MYMK. Involved in skeletal muscle regeneration in response to injury by mediating the fusion of satellite cells, a population of muscle stem cells, with injured myofibers. The chain is Protein myomixer from Homo sapiens (Human).